The sequence spans 370 residues: GMP synthase [glutamine-hydrolyzing] subunit B (370 aa).

The region spanning 3–189 (FDPQKFVDEI…LGLPRDIYNR (187 aa)) is the GMPS ATP-PPase domain. Residue 29-35 (SGGVDST) coordinates ATP.

Heterodimer composed of a glutamine amidotransferase subunit (A) and a GMP-binding subunit (B).

The enzyme catalyses XMP + L-glutamine + ATP + H2O = GMP + L-glutamate + AMP + diphosphate + 2 H(+). It functions in the pathway purine metabolism; GMP biosynthesis; GMP from XMP (L-Gln route): step 1/1. Catalyzes the synthesis of GMP from XMP. The protein is GMP synthase [glutamine-hydrolyzing] subunit B (guaAB) of Sulfurisphaera tokodaii (strain DSM 16993 / JCM 10545 / NBRC 100140 / 7) (Sulfolobus tokodaii).